The following is a 111-amino-acid chain: Nucleoid-associated protein SynRCC307_0025 (111 aa).

This sequence belongs to the YbaB/EbfC family. As to quaternary structure, homodimer.

The protein localises to the cytoplasm. The protein resides in the nucleoid. In terms of biological role, binds to DNA and alters its conformation. May be involved in regulation of gene expression, nucleoid organization and DNA protection. The polypeptide is Nucleoid-associated protein SynRCC307_0025 (Synechococcus sp. (strain RCC307)).